The primary structure comprises 295 residues: Histamine N-methyltransferase (295 aa).

A substrate-binding site is contributed by E28. G60, E89, Q94, S120, and I143 together coordinate S-adenosyl-L-methionine. Position 284 (N284) interacts with substrate.

This sequence belongs to the class I-like SAM-binding methyltransferase superfamily. HNMT family. In terms of assembly, monomer.

The protein resides in the cytoplasm. It catalyses the reaction histamine + S-adenosyl-L-methionine = N(tau)-methylhistamine + S-adenosyl-L-homocysteine + H(+). Its function is as follows. Inactivates histamine by N-methylation. Plays an important role in degrading histamine and in regulating the airway response to histamine. The sequence is that of Histamine N-methyltransferase (Hnmt) from Mus musculus (Mouse).